The primary structure comprises 59 residues: UPF0181 protein YoaH (59 aa).

Belongs to the UPF0181 family.

The polypeptide is UPF0181 protein YoaH (Escherichia coli O127:H6 (strain E2348/69 / EPEC)).